The sequence spans 41 residues: Large ribosomal subunit protein bL36 (41 aa).

It belongs to the bacterial ribosomal protein bL36 family.

The polypeptide is Large ribosomal subunit protein bL36 (Ruegeria sp. (strain TM1040) (Silicibacter sp.)).